The sequence spans 138 residues: MKPAARRRARECAVQAIYSWQLSGNSIADVELQFLSEQDVTGVDVTYFRELLSGVAVNAAKLDALMAPYLSRQLEELGQVEKAILRIAMFELSYRDDVPYKVAINEAIELAKVFGAEDSHKFVNGVLDKSGPAVRRKR.

Belongs to the NusB family.

Involved in transcription antitermination. Required for transcription of ribosomal RNA (rRNA) genes. Binds specifically to the boxA antiterminator sequence of the ribosomal RNA (rrn) operons. This chain is Transcription antitermination protein NusB, found in Photorhabdus laumondii subsp. laumondii (strain DSM 15139 / CIP 105565 / TT01) (Photorhabdus luminescens subsp. laumondii).